The following is a 353-amino-acid chain: Protein RecA (353 aa).

Residue 67–74 (GPESSGKT) coordinates ATP.

It belongs to the RecA family.

It localises to the cytoplasm. In terms of biological role, can catalyze the hydrolysis of ATP in the presence of single-stranded DNA, the ATP-dependent uptake of single-stranded DNA by duplex DNA, and the ATP-dependent hybridization of homologous single-stranded DNAs. It interacts with LexA causing its activation and leading to its autocatalytic cleavage. This chain is Protein RecA, found in Shewanella loihica (strain ATCC BAA-1088 / PV-4).